The chain runs to 426 residues: Gamma-glutamyl phosphate reductase (426 aa).

This sequence belongs to the gamma-glutamyl phosphate reductase family.

It localises to the cytoplasm. The enzyme catalyses L-glutamate 5-semialdehyde + phosphate + NADP(+) = L-glutamyl 5-phosphate + NADPH + H(+). The protein operates within amino-acid biosynthesis; L-proline biosynthesis; L-glutamate 5-semialdehyde from L-glutamate: step 2/2. Catalyzes the NADPH-dependent reduction of L-glutamate 5-phosphate into L-glutamate 5-semialdehyde and phosphate. The product spontaneously undergoes cyclization to form 1-pyrroline-5-carboxylate. The protein is Gamma-glutamyl phosphate reductase of Acidovorax ebreus (strain TPSY) (Diaphorobacter sp. (strain TPSY)).